Here is a 130-residue protein sequence, read N- to C-terminus: MVRMNVLADALKCINNAEKRGKRQVLLRPCSKVIIKFLTVMMKHGYIGEFEIVEDHRAGKIVVNLTGRLNKCGVISPRFDAPINDIEKWTNNLLPSRQFGYVVLTTSGGIMDHEEARRKHLGGKILGFFF.

This sequence belongs to the universal ribosomal protein uS8 family.

This Drosophila melanogaster (Fruit fly) protein is Small ribosomal subunit protein uS8B (RpS15Ab).